The primary structure comprises 339 residues: Ketol-acid reductoisomerase (NADP(+)) (339 aa).

A KARI N-terminal Rossmann domain is found at 1 to 182 (MPNRYYEKDG…GCLKAGVIDT (182 aa)). Residues 25–28 (YGSQ), Ser51, Ser53, and 83–86 (DHIQ) each bind NADP(+). His108 is a catalytic residue. Residue Gly134 coordinates NADP(+). The KARI C-terminal knotted domain occupies 183–328 (NFREETESDL…RELREMMTFL (146 aa)). Mg(2+)-binding residues include Asp191, Glu195, Glu227, and Glu231. Position 252 (Ser252) interacts with substrate.

It belongs to the ketol-acid reductoisomerase family. Mg(2+) serves as cofactor.

The catalysed reaction is (2R)-2,3-dihydroxy-3-methylbutanoate + NADP(+) = (2S)-2-acetolactate + NADPH + H(+). It catalyses the reaction (2R,3R)-2,3-dihydroxy-3-methylpentanoate + NADP(+) = (S)-2-ethyl-2-hydroxy-3-oxobutanoate + NADPH + H(+). The protein operates within amino-acid biosynthesis; L-isoleucine biosynthesis; L-isoleucine from 2-oxobutanoate: step 2/4. Its pathway is amino-acid biosynthesis; L-valine biosynthesis; L-valine from pyruvate: step 2/4. Its function is as follows. Involved in the biosynthesis of branched-chain amino acids (BCAA). Catalyzes an alkyl-migration followed by a ketol-acid reduction of (S)-2-acetolactate (S2AL) to yield (R)-2,3-dihydroxy-isovalerate. In the isomerase reaction, S2AL is rearranged via a Mg-dependent methyl migration to produce 3-hydroxy-3-methyl-2-ketobutyrate (HMKB). In the reductase reaction, this 2-ketoacid undergoes a metal-dependent reduction by NADPH to yield (R)-2,3-dihydroxy-isovalerate. The protein is Ketol-acid reductoisomerase (NADP(+)) of Solibacter usitatus (strain Ellin6076).